A 1001-amino-acid polypeptide reads, in one-letter code: Ankyrin repeat domain-containing protein 35 (1001 aa).

ANK repeat units lie at residues 53-82 (NGQS…DINS), 86-115 (DGST…NEDA), 119-148 (ENRS…FLDV), 152-181 (DGRT…RVNV), 185-214 (NDKS…DAGA), and 218-247 (TGHD…RRRR). 3 disordered regions span residues 256-296 (PDLA…PCSE), 352-482 (PRAS…VAEP), and 559-601 (PEVP…ALGG). The span at 281–295 (PEEEQEEKEDEDPCS) shows a compositional bias: acidic residues. Residues 295 to 344 (SEEWRWKYEEERRKVVRLEQELVQKTEECKTQAAAYLDLENQIREQAQEL) adopt a coiled-coil conformation. The span at 402–422 (KKAEDSAPGKIQYEVHGRSQP) shows a compositional bias: basic and acidic residues. A compositionally biased stretch (low complexity) spans 423–434 (EEQGPPQSPASE). Residues 440 to 450 (TGQQLTTNGAQ) show a composition bias toward polar residues. Positions 579–588 (KQDEEKEKRV) are enriched in basic and acidic residues. 3 coiled-coil regions span residues 610 to 696 (KGQL…LLAS), 733 to 810 (ISTL…IGKL), and 851 to 968 (QELK…HEEI). Positions 879 to 902 (RRSGDLAAQAAEQERQASEMRGRS) are disordered. A compositionally biased stretch (basic and acidic residues) spans 890–902 (EQERQASEMRGRS).

The polypeptide is Ankyrin repeat domain-containing protein 35 (ANKRD35) (Homo sapiens (Human)).